We begin with the raw amino-acid sequence, 520 residues long: Endosomal/lysosomal proton channel TMEM175 (520 aa).

A disordered region spans residues 1 to 27 (MGENDESEIIEHHDDEEMEKRRPPRTH). At 1–49 (MGENDESEIIEHHDDEEMEKRRPPRTHAQSFLESVASSVKEGHSSTQSS) the chain is on the cytoplasmic side. Basic and acidic residues predominate over residues 9-21 (IIEHHDDEEMEKR). Residues 50–72 (HRLLAYSDALISIIATVMILPVA) form a helical membrane-spanning segment. The RxxxFSD motif 1 motif lies at 51-57 (RLLAYSD). Residues 73-93 (HTKIQEDEELKQSIQALLTTK) lie on the Lumenal side of the membrane. The tract at residues 74–79 (TKIQED) is short helix H1-1. Residues 81 to 87 (ELKQSIQ) form a short helix H2-1 region. The chain crosses the membrane as a helical span at residues 94–116 (IAVYLMTFLIVTVAWAAHIRLFQ). The Cytoplasmic portion of the chain corresponds to 117–122 (VIERID). Residues 123 to 144 (DTLALLNLACMMLITFLPYTFS) form a helical membrane-spanning segment. Residues 145–154 (LMATFPNNIL) lie on the Lumenal side of the membrane. A helical transmembrane segment spans residues 155-176 (GILLFCACVMVIGLIQALIVLY). Topologically, residues 177 to 200 (GFSHPFLLNDQIQMSENQAYYKQH) are cytoplasmic. A run of 2 helical transmembrane segments spans residues 201–221 (ILKVIMRVPIMCLFASIFSFI) and 222–242 (FFQLSYVLLAIVIFLPYISQC). The Cytoplasmic segment spans residues 243-274 (LKWIRSKAIGGQTDESPDSMPFYTYHPSEPLS). Residues 275–299 (KERVEAFSDGVFAIVATLLILDICE) traverse the membrane as a helical segment. A RxxxFSD motif 2 motif is present at residues 277-283 (RVEAFSD). At 300-326 (GNVPDPSVVKKKFDNSLIAALQEYGPE) the chain is on the lumenal side. The interval 305–313 (PSVVKKKFD) is short helix H1-2. A short helix H2-2 region spans residues 315–321 (SLIAALQ). A helical transmembrane segment spans residues 327–349 (YLAYFGSFVTVGLLWFVHHSLFL). The Cytoplasmic portion of the chain corresponds to 350 to 355 (HVTKAT). Residues 356-377 (RLMGLFNTFSLAFVGGLPLAYQ) traverse the membrane as a helical segment. The Lumenal portion of the chain corresponds to 378–392 (LTHESPRGSRNELEA). The helical transmembrane segment at 393-413 (VQISCVIIFFASLFQLAIWVT) threads the bilayer. Over 414-433 (ALFTERETLHPYVRYGGREH) the chain is Cytoplasmic. The chain crosses the membrane as a helical span at residues 434 to 457 (TFMLAKLSLYPCVALGTFFITCIL). The Lumenal segment spans residues 458-459 (SR). The chain crosses the membrane as a helical span at residues 460–486 (FSAPIFHMMEICIPFAFLLLRLLVRVA). Over 487–520 (LALLRWLFCSARNDLERIPVEEEESRLPINDIVT) the chain is Cytoplasmic.

The protein belongs to the TMEM175 family. As to quaternary structure, homodimer.

The protein resides in the endosome membrane. The protein localises to the lysosome membrane. It carries out the reaction H(+)(in) = H(+)(out). It catalyses the reaction K(+)(in) = K(+)(out). With respect to regulation, active at low pH (under pH 4.6): proton channel activity is activated by luminal side protons. Polyunsaturated fatty acids, such as arachidonic acid, also activate the channel activity. Proton-activated proton channel that catalyzes proton efflux from endosomes and lysosomes to maintain a steady-state pH. Activated at low pH (under pH 4.6) by luminal side protons: selectively mediates lysosomal proton release from lysosomes, eliciting a proton leak that balances V-ATPase activity to maintain pH homeostasis. Regulation of lumenal pH stability is required for autophagosome-lysosome fusion. Also acts as a potassium channel at higher pH, regulating potassium conductance in endosomes and lysosomes. The chain is Endosomal/lysosomal proton channel TMEM175 from Danio rerio (Zebrafish).